The following is a 60-amino-acid chain: U-scutigerotoxin(02)-Tl4a (60 aa).

Belongs to the scutigerotoxin-02 family. In terms of processing, contains 3 disulfide bonds. As to expression, expressed by the venom gland.

Its subcellular location is the secreted. This Thereuopoda longicornis (Long-legged centipede) protein is U-scutigerotoxin(02)-Tl4a.